The chain runs to 114 residues: Small ribosomal subunit protein uS14m (114 aa).

This sequence belongs to the universal ribosomal protein uS14 family.

It is found in the mitochondrion. This chain is Small ribosomal subunit protein uS14m (MRP2), found in Eremothecium gossypii (strain ATCC 10895 / CBS 109.51 / FGSC 9923 / NRRL Y-1056) (Yeast).